Consider the following 359-residue polypeptide: Patr class I histocompatibility antigen, B-1 alpha chain (359 aa).

Positions 1-20 (APRTVLLLLSAALALTETWA) are cleaved as a signal peptide. Residues 21 to 110 (GSHSMRYFYT…ALRYYNQSEA (90 aa)) are alpha-1. Residues 21–305 (GSHSMRYFYT…PSSQSTIPIV (285 aa)) lie on the Extracellular side of the membrane. Residue Asn106 is glycosylated (N-linked (GlcNAc...) asparagine). Positions 111–202 (GSHTWQTMYG…ENGKETLQRA (92 aa)) are alpha-2. Cystine bridges form between Cys121–Cys184 and Cys223–Cys279. Positions 203–294 (DPPKTHVTHH…GLPKPLTLRW (92 aa)) are alpha-3. The Ig-like C1-type domain maps to 205-291 (PKTHVTHHPI…QHEGLPKPLT (87 aa)). The connecting peptide stretch occupies residues 295-305 (EPSSQSTIPIV). The chain crosses the membrane as a helical span at residues 306-329 (GIVAGLAVLVVTVAVVAVVAAVMC). The Cytoplasmic segment spans residues 330-359 (RRKSSGGKGGSYSQAASSDSAQGSDVSLTA). Residues 332-359 (KSSGGKGGSYSQAASSDSAQGSDVSLTA) are disordered. The span at 340–359 (SYSQAASSDSAQGSDVSLTA) shows a compositional bias: low complexity. Phosphoserine is present on residues Ser353 and Ser356.

Belongs to the MHC class I family. As to quaternary structure, heterodimer of an alpha chain and a beta chain (beta-2-microglobulin).

The protein resides in the membrane. Functionally, involved in the presentation of foreign antigens to the immune system. The protein is Patr class I histocompatibility antigen, B-1 alpha chain of Pan troglodytes (Chimpanzee).